A 101-amino-acid chain; its full sequence is Small ribosomal subunit protein uS14 (101 aa).

The tract at residues 1–21 (MAKTSSVEKNNRRRKLADQYG) is disordered.

It belongs to the universal ribosomal protein uS14 family. Part of the 30S ribosomal subunit. Contacts proteins S3 and S10.

In terms of biological role, binds 16S rRNA, required for the assembly of 30S particles and may also be responsible for determining the conformation of the 16S rRNA at the A site. The chain is Small ribosomal subunit protein uS14 from Mesorhizobium japonicum (strain LMG 29417 / CECT 9101 / MAFF 303099) (Mesorhizobium loti (strain MAFF 303099)).